The following is a 349-amino-acid chain: Glycerol-3-phosphate dehydrogenase [NAD(+)], cytoplasmic (349 aa).

NAD(+) is bound by residues 10-15, phenylalanine 41, and phenylalanine 97; that span reads GSGNWG. Lysine 120 provides a ligand contact to substrate. An NAD(+)-binding site is contributed by alanine 153. Position 154 is a phosphoserine (serine 154). Residue lysine 204 is the Proton acceptor of the active site. Arginine 269 contributes to the NAD(+) binding site. Residue 269–270 coordinates substrate; it reads RN. Lysine 289 carries the N6-succinyllysine modification. Residues lysine 296 and glutamine 298 each contribute to the NAD(+) site. Tyrosine 326 is subject to Phosphotyrosine.

This sequence belongs to the NAD-dependent glycerol-3-phosphate dehydrogenase family. Homodimer. In terms of tissue distribution, expressed in liver (at protein level).

It is found in the cytoplasm. The catalysed reaction is sn-glycerol 3-phosphate + NAD(+) = dihydroxyacetone phosphate + NADH + H(+). Its activity is regulated as follows. Inhibited by zinc ions and sulfate. Its function is as follows. Has glycerol-3-phosphate dehydrogenase activity. The polypeptide is Glycerol-3-phosphate dehydrogenase [NAD(+)], cytoplasmic (Homo sapiens (Human)).